The sequence spans 220 residues: Metalloproteinase inhibitor 2 (220 aa).

The N-terminal stretch at Met-1–Ala-26 is a signal peptide. Cys-27 is a binding site for Zn(2+). The involved in metalloproteinase-binding stretch occupies residues Cys-27–Ser-30. 6 disulfide bridges follow: Cys-27–Cys-98, Cys-29–Cys-127, Cys-39–Cys-152, Cys-154–Cys-201, Cys-159–Cys-164, and Cys-172–Cys-193. In terms of domain architecture, NTR spans Cys-27 to Cys-152.

It belongs to the protease inhibitor I35 (TIMP) family. In terms of assembly, interacts (via the C-terminal) with MMP2 (via the C-terminal PEX domain); the interaction inhibits the MMP2 activity. The activity of TIMP2 is dependent on the presence of disulfide bonds.

Its subcellular location is the secreted. Complexes with metalloproteinases (such as collagenases) and irreversibly inactivates them by binding to their catalytic zinc cofactor. The polypeptide is Metalloproteinase inhibitor 2 (TIMP2) (Bos taurus (Bovine)).